The chain runs to 574 residues: Ankyrin repeat protein B19 (574 aa).

ANK repeat units lie at residues 56–87, 135–164, 167–213, 217–249, 253–285, and 327–356; these read TGYT…DVTM, IKSR…DPNF, DGYT…NLNA, CGNT…NFEI, HGLT…NVGE, and EGKT…DINA. The F-box domain occupies 541 to 574; it reads NCLLTLLPSEIIYEILYMLTINDLYNISYPPTKV.

This sequence belongs to the poxvirinae B18 protein family.

In Vaccinia virus (strain Western Reserve) (VACV), this protein is Ankyrin repeat protein B19.